The chain runs to 212 residues: uncharacterized protein (212 aa).

Residues 1 to 18 form the signal peptide; that stretch reads MQLTQVLAVAILAAGVSA. Residues 108–180 are disordered; it reads VSHNRVNAKQ…KDYGHKDYGH (73 aa). The segment covering 117–180 has biased composition (basic and acidic residues); the sequence is QRRDDKKDYG…KDYGHKDYGH (64 aa). The tract at residues 120–210 is 15 X 5 AA tandem repeats of K-D-Y-G-H; sequence DDKKDYGKND…KDYGYKGYDD (91 aa). Residues 123 to 127 form repeat 1; it reads KDYGK. The stretch at 128 to 132 is one 2; truncated repeat; that stretch reads NDYGK. Tandem repeats lie at residues 133-137, 138-142, and 143-147. The stretch at 148–152 is one 6; truncated repeat; that stretch reads KEYDP. 5 tandem repeats follow at residues 166-170, 171-175, 176-180, 181-185, and 186-190. A 12; truncated repeat occupies 191-195; sequence DDYGY. Residues 196-200 form a 13; truncated repeat; that stretch reads KGYDD. Residues 201 to 205 form a 14; truncated repeat; sequence KDYGY. A 15; truncated repeat occupies 206–210; it reads KGYDD.

It is found in the secreted. This is an uncharacterized protein from Arthroderma benhamiae (strain ATCC MYA-4681 / CBS 112371) (Trichophyton mentagrophytes).